The following is a 460-amino-acid chain: 1-aminocyclopropane-1-carboxylate synthase 11 (460 aa).

The substrate site is built by glutamate 45 and tyrosine 83. N6-(pyridoxal phosphate)lysine is present on lysine 267.

This sequence belongs to the class-I pyridoxal-phosphate-dependent aminotransferase family. In terms of assembly, homodimer and heterodimer. In vivo, the relevance of heterodimerization with other ACS enzymes is however unsure. Interacts with GRF3. Requires pyridoxal 5'-phosphate as cofactor. May be processed at its C-terminus. As to expression, expressed in roots.

The enzyme catalyses S-adenosyl-L-methionine = 1-aminocyclopropane-1-carboxylate + S-methyl-5'-thioadenosine + H(+). It functions in the pathway alkene biosynthesis; ethylene biosynthesis via S-adenosyl-L-methionine; ethylene from S-adenosyl-L-methionine: step 1/2. Functionally, 1-aminocyclopropane-1-carboxylate synthase (ACS) enzymes catalyze the conversion of S-adenosyl-L-methionine (SAM) into 1-aminocyclopropane-1-carboxylate (ACC), a direct precursor of ethylene. The chain is 1-aminocyclopropane-1-carboxylate synthase 11 (ACS11) from Arabidopsis thaliana (Mouse-ear cress).